The sequence spans 134 residues: UPF0412 protein YaaI (134 aa).

A signal peptide spans 1-23; the sequence is MRSVLTISAGLLFGLALSSVAHA.

The protein belongs to the UPF0412 family.

This is UPF0412 protein YaaI from Salmonella agona (strain SL483).